A 368-amino-acid chain; its full sequence is Nuclease EXOG, mitochondrial (368 aa).

The transit peptide at 1 to 41 directs the protein to the mitochondrion; that stretch reads MAIKSIASRLRGSRRFLSGFVAGAVVGAAGAGLAALQFFRS. H140 (proton acceptor) is an active-site residue. Residue N171 participates in a divalent metal cation binding.

It belongs to the DNA/RNA non-specific endonuclease family. Homodimer. The cofactor is a divalent metal cation. In terms of tissue distribution, ubiquitous.

It localises to the mitochondrion inner membrane. In terms of biological role, endo/exonuclease with nicking activity towards supercoiled DNA, a preference for single-stranded DNA and 5'-3' exonuclease activity. The protein is Nuclease EXOG, mitochondrial (EXOG) of Homo sapiens (Human).